Reading from the N-terminus, the 282-residue chain is Heme oxygenase 1, chloroplastic (282 aa).

The transit peptide at 1-56 directs the protein to the chloroplast; the sequence is MASATVVSQIQSLYIIKPRLSPPPPPHRQFRSIYFPTTRLLQQHRFRQMKSVVIVP. H86 contacts heme b.

The protein belongs to the heme oxygenase family. In terms of tissue distribution, highly expressed in root nodules and, to a lower extent, in leaves, shoots, roots, flowers and pods (at protein level).

It is found in the plastid. It localises to the chloroplast. The enzyme catalyses heme b + 3 reduced [NADPH--hemoprotein reductase] + 3 O2 = biliverdin IXalpha + CO + Fe(2+) + 3 oxidized [NADPH--hemoprotein reductase] + 3 H2O + H(+). In terms of biological role, key enzyme in the synthesis of the chromophore of the phytochrome family of plant photoreceptors. Catalyzes the opening of the heme ring to form the open-chain tetrapyrrole biliverdin IX with the release of iron and carbon monoxide (CO). Produces specifically the biliverdin IX-alpha isomer. Can form complex with heme, is ferredoxin-dependent and its activity is increased in the presence of ascorbate. May affect the plastid-to-nucleus signaling pathway by perturbing tetrapyrrole synthesis. The plastid-to-nucleus signal plays an important role in the coordinated expression of both nuclear- and chloroplast-localized genes that encode photosynthesis-related proteins. Required for efficient symbiotic nitrogen fixation (SNF) in root nodules. Responsible for heme catabolism in uninfected nodule interstitial cells (UC), preventing superoxide production under stressful conditions (e.g. nitrate exposure and darkness) and catalyzing biliverdin (BV) production in senescing green nodules. The protein is Heme oxygenase 1, chloroplastic of Lotus japonicus (Lotus corniculatus var. japonicus).